The primary structure comprises 544 residues: Probable protein kinase UbiB (544 aa).

The Protein kinase domain maps to 123–501; that stretch reads DFDLVPLASA…KRQQATGKFL (379 aa). Residues 129-137 and lysine 152 contribute to the ATP site; that span reads LASASIAQV. Aspartate 287 (proton acceptor) is an active-site residue. 2 consecutive transmembrane segments (helical) span residues 496 to 516 and 519 to 539; these read ATGK…AILV and TYEQ…LFSW.

It belongs to the ABC1 family. UbiB subfamily.

Its subcellular location is the cell inner membrane. It participates in cofactor biosynthesis; ubiquinone biosynthesis [regulation]. Its function is as follows. Is probably a protein kinase regulator of UbiI activity which is involved in aerobic coenzyme Q (ubiquinone) biosynthesis. The protein is Probable protein kinase UbiB of Vibrio vulnificus (strain YJ016).